The chain runs to 449 residues: Hyaluronidase-4 (449 aa).

A signal peptide spans 1 to 23; the sequence is MYHIWIKFLAAWIFLKRFNGVHV. Intrachain disulfides connect C47/C340 and C211/C227. N-linked (GlcNAc...) asparagine glycans are attached at residues N67, N103, and N111. E135 functions as the Proton donor in the catalytic mechanism. An N-linked (GlcNAc...) asparagine glycan is attached at N153. An N-linked (GlcNAc...) asparagine glycan is attached at N357. Disulfide bonds link C365–C376, C370–C427, and C429–C438. N401 carries N-linked (GlcNAc...) asparagine glycosylation. Positions 427 to 438 constitute an EGF-like domain; sequence CQCYQGWKGLYC.

This sequence belongs to the glycosyl hydrolase 56 family. Monomer. Expressed by the venom gland.

The protein localises to the secreted. It carries out the reaction Random hydrolysis of (1-&gt;4)-linkages between N-acetyl-beta-D-glucosamine and D-glucuronate residues in hyaluronate.. Its function is as follows. Snake venom endo-hyaluronidase that degrades hyaluronan to smaller oligosaccharide fragments. In venom, it is not toxic by itself, but increases the diffusion of other venom proteins by degrading the extracellular matrix. In addition, it displays antiedematogenic activity. In Cerastes cerastes (Horned desert viper), this protein is Hyaluronidase-4.